The sequence spans 85 residues: Small ribosomal subunit protein uS17 (85 aa).

Belongs to the universal ribosomal protein uS17 family. As to quaternary structure, part of the 30S ribosomal subunit.

Functionally, one of the primary rRNA binding proteins, it binds specifically to the 5'-end of 16S ribosomal RNA. This chain is Small ribosomal subunit protein uS17, found in Pasteurella multocida (strain Pm70).